A 149-amino-acid polypeptide reads, in one-letter code: Calmodulin-1 (149 aa).

Position 2 is an N-acetylalanine (alanine 2). 4 consecutive EF-hand domains span residues 8 to 43 (EQIA…LGQN), 44 to 79 (PTEA…KMKD), 81 to 116 (DSEE…LGEK), and 117 to 149 (LTDE…MTSK). Ca(2+)-binding residues include aspartate 21, aspartate 23, aspartate 25, threonine 27, glutamate 32, aspartate 57, aspartate 59, asparagine 61, threonine 63, glutamate 68, aspartate 94, aspartate 96, asparagine 98, and glutamate 105. Lysine 116 is subject to N6,N6,N6-trimethyllysine. Positions 130, 132, 134, 136, and 141 each coordinate Ca(2+).

It belongs to the calmodulin family.

Its function is as follows. Calmodulin mediates the control of a large number of enzymes, ion channels and other proteins by Ca(2+). Among the enzymes to be stimulated by the calmodulin-Ca(2+) complex are a number of protein kinases and phosphatases. The polypeptide is Calmodulin-1 (Branchiostoma floridae (Florida lancelet)).